The sequence spans 301 residues: D-psicose 3-epimerase (301 aa).

Tyrosine 16 is a binding site for substrate. Glutamate 162 functions as the Proton donor/acceptor in the catalytic mechanism. Residue glutamate 162 participates in Mn(2+) binding. Substrate-binding positions include glutamate 168 and 195-198 (DTFH). Aspartate 195 and histidine 221 together coordinate Mn(2+). Arginine 227 contributes to the substrate binding site. Glutamate 256 (proton donor/acceptor) is an active-site residue. Glutamate 256 serves as a coordination point for Mn(2+).

Belongs to the hyi family. In terms of assembly, homotetramer. Mn(2+) is required as a cofactor. The cofactor is Co(2+).

The catalysed reaction is D-allulose = keto-D-fructose. With respect to regulation, completely inhibited by EDTA and partially inhibited by Zn(2+), Mg(2+) and Cu(2+). In terms of biological role, involved in the biosynthesis of D-psicose. Catalyzes the reversible epimerization of D-fructose at the C3 position to yield D-psicose. The enzyme is highly specific for D-psicose and shows very low activity with D-tagatose. This chain is D-psicose 3-epimerase, found in Enterocloster bolteae (strain ATCC BAA-613 / DSM 15670 / CCUG 46953 / JCM 12243 / WAL 16351) (Clostridium bolteae).